The sequence spans 722 residues: DUF724 domain-containing protein 7 (722 aa).

Positions 424 to 449 (KTTPKKKLQAMKNQKSSTNDSVGEKV) are disordered. The span at 434 to 444 (MKNQKSSTNDS) shows a compositional bias: polar residues. In terms of domain architecture, DUF724 spans 540-720 (VLPFVKKSQL…HEFQAILAAP (181 aa)). The stretch at 645–712 (CALEELKAVE…DQEVQNVDHE (68 aa)) forms a coiled coil.

Homodimer. Interacts wtih ABAP1, ARIA and LHP1. Interacts with the non-modified histones H1, H2B, H3 and H4. In terms of tissue distribution, expressed in roots, leaves, stems and flowers.

The protein localises to the nucleus. In terms of biological role, may act as a link between DNA replication, transcription and chromatin remodeling during flower development. May participate in the repression of LHP1-targeted genes during flower development by direct interaction with LHP1. May be involved in the polar growth of plant cells via transportation of RNAs. The sequence is that of DUF724 domain-containing protein 7 from Arabidopsis thaliana (Mouse-ear cress).